Consider the following 304-residue polypeptide: Putative S-adenosyl-L-methionine-dependent methyltransferase Mmcs_1043 (304 aa).

Residues Asp-130 and 159 to 160 (DL) contribute to the S-adenosyl-L-methionine site.

This sequence belongs to the UPF0677 family.

Functionally, exhibits S-adenosyl-L-methionine-dependent methyltransferase activity. The protein is Putative S-adenosyl-L-methionine-dependent methyltransferase Mmcs_1043 of Mycobacterium sp. (strain MCS).